Here is a 997-residue protein sequence, read N- to C-terminus: Malignant fibrous histiocytoma-amplified sequence 1 homolog (997 aa).

LRR repeat units follow at residues Ser32–Gly53, Asp54–Ser76, Asn79–Leu100, Arg102–Leu123, Lys125–Leu146, Asp148–Pro170, Ser171–Val192, Ala194–Met216, Ser218–Leu239, Asn241–Leu262, Lys264–Val286, Asp287–Met308, Lys310–Leu331, and Phe333–Leu354. The 234-residue stretch at Gln393–Arg626 folds into the Roc domain. The COR domain occupies Pro637–Ile861.

Its subcellular location is the cytoplasm. In terms of biological role, probable GTP-binding protein. Functions in innate immunity and more specifically the inflammatory response as a regulator of the Toll-like receptor TLR2 and TLR4 signaling pathways. This chain is Malignant fibrous histiocytoma-amplified sequence 1 homolog (mfhas1), found in Xenopus tropicalis (Western clawed frog).